The primary structure comprises 198 residues: Recombination protein RecR (198 aa).

The C4-type zinc finger occupies 57-72; that stretch reads CSVCGHITENDPCYIC. The 96-residue stretch at 80–175 folds into the Toprim domain; the sequence is SVICVVEDDK…KVTRLAQGLS (96 aa).

The protein belongs to the RecR family.

May play a role in DNA repair. It seems to be involved in an RecBC-independent recombinational process of DNA repair. It may act with RecF and RecO. In Staphylococcus aureus (strain JH1), this protein is Recombination protein RecR.